The sequence spans 185 residues: Meiotically up-regulated gene 5 protein (185 aa).

Its subcellular location is the cytoplasm. Required for correct meiotic chromosome segregation. This Schizosaccharomyces pombe (strain 972 / ATCC 24843) (Fission yeast) protein is Meiotically up-regulated gene 5 protein (mug5).